The chain runs to 394 residues: ATP phosphoribosyltransferase regulatory subunit (394 aa).

It belongs to the class-II aminoacyl-tRNA synthetase family. HisZ subfamily. Heteromultimer composed of HisG and HisZ subunits.

Its subcellular location is the cytoplasm. It functions in the pathway amino-acid biosynthesis; L-histidine biosynthesis; L-histidine from 5-phospho-alpha-D-ribose 1-diphosphate: step 1/9. In terms of biological role, required for the first step of histidine biosynthesis. May allow the feedback regulation of ATP phosphoribosyltransferase activity by histidine. This Pseudomonas paraeruginosa (strain DSM 24068 / PA7) (Pseudomonas aeruginosa (strain PA7)) protein is ATP phosphoribosyltransferase regulatory subunit.